The chain runs to 514 residues: Peptide chain release factor 3 (514 aa).

Residues 8–268 form the tr-type G domain; it reads KKRRTFAIIS…TFLKFAPEPH (261 aa). GTP-binding positions include 17–24, 85–89, and 139–142; these read SHPDAGKT, DTPGH, and NKLD.

The protein belongs to the TRAFAC class translation factor GTPase superfamily. Classic translation factor GTPase family. PrfC subfamily.

It localises to the cytoplasm. Functionally, increases the formation of ribosomal termination complexes and stimulates activities of RF-1 and RF-2. It binds guanine nucleotides and has strong preference for UGA stop codons. It may interact directly with the ribosome. The stimulation of RF-1 and RF-2 is significantly reduced by GTP and GDP, but not by GMP. This Streptococcus gordonii (strain Challis / ATCC 35105 / BCRC 15272 / CH1 / DL1 / V288) protein is Peptide chain release factor 3.